A 309-amino-acid chain; its full sequence is Homoserine O-succinyltransferase (309 aa).

Residue Cys-142 is the Acyl-thioester intermediate of the active site. Residues Lys-163 and Ser-192 each contribute to the substrate site. His-235 functions as the Proton acceptor in the catalytic mechanism. Glu-237 is a catalytic residue. Arg-249 serves as a coordination point for substrate.

This sequence belongs to the MetA family.

The protein resides in the cytoplasm. The catalysed reaction is L-homoserine + succinyl-CoA = O-succinyl-L-homoserine + CoA. Its pathway is amino-acid biosynthesis; L-methionine biosynthesis via de novo pathway; O-succinyl-L-homoserine from L-homoserine: step 1/1. In terms of biological role, transfers a succinyl group from succinyl-CoA to L-homoserine, forming succinyl-L-homoserine. In Pectobacterium carotovorum subsp. carotovorum (strain PC1), this protein is Homoserine O-succinyltransferase.